A 407-amino-acid polypeptide reads, in one-letter code: 45 kDa calcium-binding protein (407 aa).

The signal sequence occupies residues 1-35; it reads MVWSWVAMASRWGPLVGLAPRCLWLLGAVLLMDAS. An N-linked (GlcNAc...) asparagine glycan is attached at Asn40. EF-hand domains are found at residues 98–133 and 137–172; these read RSRR…KTAE and EAME…SKGH. Ser99 bears the Phosphoserine mark. Ca(2+)-binding residues include Asp111, Asn113, Asp115, Lys117, Glu122, Asp150, Asp152, Asp154, His156, and Glu161. Residues Thr193 and Thr217 each carry the phosphothreonine modification. The segment covering 249-259 has biased composition (low complexity); the sequence is GSSLAGAPGPG. The disordered stretch occupies residues 249-282; the sequence is GSSLAGAPGPGDQRQGPGIAGKSGKVLREPQPGC. Positions 291, 293, 295, 297, and 302 each coordinate Ca(2+). EF-hand domains follow at residues 291–313, 323–358, and 359–394; these read DQDG…TVEN, WVKD…MNEY, and NALN…FTGS. The residue at position 310 (Thr310) is a Phosphothreonine. Positions 336, 338, and 340 each coordinate Ca(2+). At Thr344 the chain carries Phosphothreonine. Ca(2+) is bound by residues Glu347, Asp372, Asn374, Asn376, His378, and Glu383. The interval 354–407 is necessary for intracellular retention in Golgi apparatus lumen; the sequence is PMNEYNALNEAKQMIAVADENQNHHLEPEEVLKYSEFFTGSKLVDYARSVHEEF.

This sequence belongs to the CREC family.

It localises to the golgi apparatus lumen. May regulate calcium-dependent activities in the endoplasmic reticulum lumen or post-ER compartment. The protein is 45 kDa calcium-binding protein (SDF4) of Macaca fascicularis (Crab-eating macaque).